The sequence spans 238 residues: Large ribosomal subunit protein uL2 (238 aa).

The segment at 200 to 238 is disordered; that stretch reads HGGGLHQSVSRPSTVSRNAPPGRKVGHIAARRTGRKEGK. Residues 206 to 216 are compositionally biased toward polar residues; sequence QSVSRPSTVSR. Over residues 223-238 the composition is skewed to basic residues; sequence KVGHIAARRTGRKEGK.

It belongs to the universal ribosomal protein uL2 family. As to quaternary structure, part of the 50S ribosomal subunit. Forms a bridge to the 30S subunit in the 70S ribosome.

One of the primary rRNA binding proteins. Required for association of the 30S and 50S subunits to form the 70S ribosome, for tRNA binding and peptide bond formation. It has been suggested to have peptidyltransferase activity; this is somewhat controversial. Makes several contacts with the 16S rRNA in the 70S ribosome. In Saccharolobus islandicus (strain L.S.2.15 / Lassen #1) (Sulfolobus islandicus), this protein is Large ribosomal subunit protein uL2.